Reading from the N-terminus, the 493-residue chain is Kelch-like protein 42 (493 aa).

Positions 5–77 (EMVQIRLEDR…INAGGAREGW (73 aa)) constitute a BTB domain. Kelch repeat units follow at residues 183–241 (VLVA…ILDN), 242–289 (YLFI…AVNS), 291–332 (LYAI…ECKG), 334–379 (IYVI…SVEE), 381–436 (IYIV…ALHN), and 438–487 (GIYI…SLYL).

Component of the BCR(KLHL42) E3 ubiquitin ligase complex, at least composed of CUL3 and KLHL42. Interacts (via the BTB domain) with CUL3. Interacts (via the kelch domains) with KATNA1.

It is found in the cytoplasm. Its subcellular location is the cytoskeleton. The protein localises to the spindle. It functions in the pathway protein modification; protein ubiquitination. Its function is as follows. Substrate-specific adapter of a BCR (BTB-CUL3-RBX1) E3 ubiquitin-protein ligase complex required for mitotic progression and cytokinesis. The BCR(KLHL42) E3 ubiquitin ligase complex mediates the ubiquitination and subsequent degradation of KATNA1. Involved in microtubule dynamics throughout mitosis. This chain is Kelch-like protein 42 (Klhl42), found in Mus musculus (Mouse).